The primary structure comprises 739 residues: Catalase-peroxidase (739 aa).

Residues 1–23 (MLKKIVTALGMSGMLLASNSAIA) form the signal peptide. A cross-link (tryptophyl-tyrosyl-methioninium (Trp-Tyr) (with M-247)) is located at residues 100–221 (WHDAGTYRIY…YAATQMGLIY (122 aa)). Histidine 101 acts as the Proton acceptor in catalysis. The tryptophyl-tyrosyl-methioninium (Tyr-Met) (with W-100) cross-link spans 221–247 (YVNPEGPDGKPDIKGAASEIRQAFRAM). Histidine 262 is a heme b binding site.

This sequence belongs to the peroxidase family. Peroxidase/catalase subfamily. As to quaternary structure, homodimer or homotetramer. Heme b serves as cofactor. Post-translationally, formation of the three residue Trp-Tyr-Met cross-link is important for the catalase, but not the peroxidase activity of the enzyme.

It catalyses the reaction H2O2 + AH2 = A + 2 H2O. It carries out the reaction 2 H2O2 = O2 + 2 H2O. In terms of biological role, bifunctional enzyme with both catalase and broad-spectrum peroxidase activity. This is Catalase-peroxidase from Francisella tularensis subsp. novicida (strain U112).